A 780-amino-acid chain; its full sequence is Ribonucleoside-diphosphate reductase large subunit (780 aa).

Substrate contacts are provided by residues Thr177, 192–193 (SC), Gly223, 393–397 (NLCAE), and 595–599 (PTVGS). Cys193 and Cys409 are joined by a disulfide. Asn393 functions as the Proton acceptor in the catalytic mechanism. Cys395 serves as the catalytic Cysteine radical intermediate. The active-site Proton acceptor is Glu397.

It belongs to the ribonucleoside diphosphate reductase large chain family. Heterotetramer composed of a homodimer of the large subunit (R1) and a homodimer of the small subunit (R2). Larger multisubunit protein complex are also active, composed of (R1)n(R2)n.

It carries out the reaction a 2'-deoxyribonucleoside 5'-diphosphate + [thioredoxin]-disulfide + H2O = a ribonucleoside 5'-diphosphate + [thioredoxin]-dithiol. Functionally, ribonucleoside-diphosphate reductase holoenzyme provides the precursors necessary for viral DNA synthesis. Allows virus growth in non-dividing cells, as well as reactivation from latency in infected hosts. Catalyzes the biosynthesis of deoxyribonucleotides from the corresponding ribonucleotides. The sequence is that of Ribonucleoside-diphosphate reductase large subunit from Connochaetes taurinus (Blue wildebeest).